The primary structure comprises 78 residues: Large ribosomal subunit protein bL28 (78 aa).

Residues 1 to 21 (MSRVCQVTGKSPITGNNVSHA) form a disordered region. Over residues 8–21 (TGKSPITGNNVSHA) the composition is skewed to polar residues.

It belongs to the bacterial ribosomal protein bL28 family.

This Hahella chejuensis (strain KCTC 2396) protein is Large ribosomal subunit protein bL28.